Here is an 850-residue protein sequence, read N- to C-terminus: Transforming growth factor beta receptor type 3 (850 aa).

Positions 1–22 (MAVTSHHMVPVFVLMSACLATA) are cleaved as a signal peptide. Residues 23-785 (GPEPSTRCEL…QIFHGLDTLT (763 aa)) lie on the Extracellular side of the membrane. Cys54 and Cys199 are oxidised to a cystine. N-linked (GlcNAc...) asparagine glycans are attached at residues Asn143 and Asn491. One can recognise a ZP domain in the interval 454 to 728 (KCDNEKMVVA…PKCVTPDDAC (275 aa)). The interval 528 to 557 (SPGDSSGWPDGYEDLESGDNGFPGDTDEGE) is disordered. 2 O-linked (Xyl...) (glycosaminoglycan) serine glycosylation sites follow: Ser533 and Ser544. 3 N-linked (GlcNAc...) asparagine glycosylation sites follow: Asn570, Asn589, and Asn696. Intrachain disulfides connect Cys638–Cys704, Cys659–Cys728, and Cys709–Cys721. The interaction with TGF-beta ligand stretch occupies residues 735–749 (MIWTMMQNKKTFTKP). A helical membrane pass occupies residues 786-808 (VMGIAFAAFVIGALLTGALWYIY). Topologically, residues 809 to 850 (SHTGETARRQQVPTSPPASENSSAAHSIGSTQSTPCSSSSTA) are cytoplasmic. Positions 817–833 (RQQVPTSPPASENSSAA) are enriched in polar residues. Positions 817–850 (RQQVPTSPPASENSSAAHSIGSTQSTPCSSSSTA) are disordered. Residues 835–850 (SIGSTQSTPCSSSSTA) show a composition bias toward low complexity. At Thr839 the chain carries Phosphothreonine.

As to quaternary structure, forms homodimers and homooligomers. Interacts with DYNLT4. Interacts with integrin ITGA5:ITGB1; this interaction promotes the internalization and trafficking of ITGA5:ITGB1 into endocytic vesicles. Interacts with TGFB1, BMP2, BMP5, BMP7 or GDF5 and inhibin A via the ligand binding domains. Interacts with ALK3/BMPR1A; this interaction results in the cell surface retention of BMPR1A. Interacts with ALK6/BMPR1B; this interaction enhances BMPR1B-mediated stimulation of the BMP signaling pathway. Interacts with the scaffolding protein beta-arrestin2/ARRB2; this interaction mediates internalization of TGFBR3 and thus regulates migration, actin cytoskeleton and activation of CDC42. Post-translationally, extensively modified by glycosaminoglycan groups (GAG). Phosphorylated in the cytoplasmic domain by the type II receptor TGFBR2 at THR-839 to mediate recruitment of ARRB2 and subsequent internalization of TGFBR2 and TGFBR3.

It localises to the cell membrane. It is found in the secreted. The protein localises to the extracellular space. Its subcellular location is the extracellular matrix. Its function is as follows. Cell surface receptor that regulates diverse cellular processes including cell proliferation, differentiation, migration, and apoptosis. Initiates BMP, inhibin, and TGF-beta signaling pathways by interacting with different ligands including TGFB1, BMP2, BMP5, BMP7 or GDF5. Alternatively, acts as a cell surface coreceptor for BMP ligands, serving to enhance ligand binding by differentially regulating BMPR1A/ALK3 and BMPR1B/ALK6 receptor trafficking. Promotes epithelial cell adhesion, focal adhesion formation and integrin signaling during epithelial cell spreading on fibronectin. By interacting with the scaffolding protein beta-arrestin2/ARRB2, regulates migration or actin cytoskeleton and promotes the activation of CDC42 as well as the inhibition of NF-kappa-B. In gonadotrope cells, acts as an inhibin A coreceptor and regulates follicle-stimulating hormone (FSH) levels and female fertility. Plays a role in the inhibition of directed and random cell migration in epithelial cells by altering the actin cytoskeletal organization. Participates in epithelial-mesenchymal transformation (EMT) upon binding to BMP2 or TGFB2, by activating the PAR6/SMURF1/RHOA pathway. This Mus musculus (Mouse) protein is Transforming growth factor beta receptor type 3 (Tgfbr3).